A 445-amino-acid polypeptide reads, in one-letter code: Xylose isomerase (445 aa).

Active-site residues include H99 and D102. E230, E266, H269, D294, D305, D307, and D337 together coordinate Mg(2+).

It belongs to the xylose isomerase family. In terms of assembly, homotetramer. Mg(2+) serves as cofactor.

Its subcellular location is the cytoplasm. It carries out the reaction alpha-D-xylose = alpha-D-xylulofuranose. The chain is Xylose isomerase from Geobacillus kaustophilus (strain HTA426).